A 516-amino-acid polypeptide reads, in one-letter code: Cytochrome P450 1A2 (516 aa).

A glycan (O-linked (GlcNAc) serine) is linked at Ser69. Phe226 is a substrate binding site. Cys458 provides a ligand contact to heme.

It belongs to the cytochrome P450 family. Interacts with PGRMC1; the interaction requires PGRMC1 homodimerization. Heme is required as a cofactor.

It is found in the endoplasmic reticulum membrane. The protein resides in the microsome membrane. The catalysed reaction is an organic molecule + reduced [NADPH--hemoprotein reductase] + O2 = an alcohol + oxidized [NADPH--hemoprotein reductase] + H2O + H(+). The enzyme catalyses 17beta-estradiol + reduced [NADPH--hemoprotein reductase] + O2 = 2-hydroxy-17beta-estradiol + oxidized [NADPH--hemoprotein reductase] + H2O + H(+). It carries out the reaction 17beta-estradiol + reduced [NADPH--hemoprotein reductase] + O2 = 4-hydroxy-17beta-estradiol + oxidized [NADPH--hemoprotein reductase] + H2O + H(+). It catalyses the reaction estrone + reduced [NADPH--hemoprotein reductase] + O2 = 2-hydroxyestrone + oxidized [NADPH--hemoprotein reductase] + H2O + H(+). The catalysed reaction is estrone + reduced [NADPH--hemoprotein reductase] + O2 = 4-hydroxyestrone + oxidized [NADPH--hemoprotein reductase] + H2O + H(+). The enzyme catalyses cholesterol + reduced [NADPH--hemoprotein reductase] + O2 = 25-hydroxycholesterol + oxidized [NADPH--hemoprotein reductase] + H2O + H(+). It carries out the reaction all-trans-retinol + reduced [NADPH--hemoprotein reductase] + O2 = all-trans-retinal + oxidized [NADPH--hemoprotein reductase] + 2 H2O + H(+). It catalyses the reaction all-trans-retinal + reduced [NADPH--hemoprotein reductase] + O2 = all-trans-retinoate + oxidized [NADPH--hemoprotein reductase] + H2O + 2 H(+). The catalysed reaction is (5Z,8Z,11Z,14Z)-eicosatetraenoate + reduced [NADPH--hemoprotein reductase] + O2 = (14R,15S)-epoxy-(5Z,8Z,11Z)-eicosatrienoate + oxidized [NADPH--hemoprotein reductase] + H2O + H(+). The enzyme catalyses (5Z,8Z,11Z,14Z)-eicosatetraenoate + reduced [NADPH--hemoprotein reductase] + O2 = (14S,15R)-epoxy-(5Z,8Z,11Z)-eicosatrienoate + oxidized [NADPH--hemoprotein reductase] + H2O + H(+). It carries out the reaction (5Z,8Z,11Z,14Z,17Z)-eicosapentaenoate + reduced [NADPH--hemoprotein reductase] + O2 = (17R,18S)-epoxy-(5Z,8Z,11Z,14Z)-eicosatetraenoate + oxidized [NADPH--hemoprotein reductase] + H2O + H(+). It catalyses the reaction (4Z,7Z,10Z,13Z,16Z,19Z)-docosahexaenoate + reduced [NADPH--hemoprotein reductase] + O2 = (19R,20S)-epoxy-(4Z,7Z,10Z,13Z,16Z)-docosapentaenoate + oxidized [NADPH--hemoprotein reductase] + H2O + H(+). The catalysed reaction is (5S)-hydroperoxy-(6E,8Z,11Z,14Z)-eicosatetraenoate = 5-oxo-(6E,8Z,11Z,14Z)-eicosatetraenoate + H2O. The enzyme catalyses (12S)-hydroperoxy-(5Z,8Z,10E,14Z)-eicosatetraenoate = 12-oxo-(5Z,8Z,10E,14Z)-eicosatetraenoate + H2O. It carries out the reaction (15S)-hydroperoxy-(5Z,8Z,11Z,13E)-eicosatetraenoate = 15-oxo-(5Z,8Z,11Z,13E)-eicosatetraenoate + H2O. It catalyses the reaction (13S)-hydroperoxy-(9Z,11E)-octadecadienoate = 13-oxo-(9Z,11E)-octadecadienoate + H2O. The catalysed reaction is (5Z,8Z,11Z,14Z)-eicosatetraenoate + reduced [NADPH--hemoprotein reductase] + O2 = 13-hydroxy-(5Z,8Z,11Z,14Z)-eicosatetraenoate + oxidized [NADPH--hemoprotein reductase] + H2O + H(+). The enzyme catalyses (5Z,8Z,11Z,14Z)-eicosatetraenoate + reduced [NADPH--hemoprotein reductase] + O2 = 19-hydroxy-(5Z,8Z,11Z,14Z)-eicosatetraenoate + oxidized [NADPH--hemoprotein reductase] + H2O + H(+). It carries out the reaction (9Z,12Z)-octadecadienoate + reduced [NADPH--hemoprotein reductase] + O2 = 11-hydroxy-(9Z,12Z)-octadecadienoate + oxidized [NADPH--hemoprotein reductase] + H2O + H(+). The protein operates within cofactor metabolism; retinol metabolism. It participates in steroid metabolism; cholesterol metabolism. It functions in the pathway lipid metabolism; arachidonate metabolism. Functionally, a cytochrome P450 monooxygenase involved in the metabolism of various endogenous substrates, including fatty acids, steroid hormones and vitamins. Mechanistically, uses molecular oxygen inserting one oxygen atom into a substrate, and reducing the second into a water molecule, with two electrons provided by NADPH via cytochrome P450 reductase (NADPH--hemoprotein reductase). Catalyzes the hydroxylation of carbon-hydrogen bonds. Exhibits high catalytic activity for the formation of hydroxyestrogens from estrone (E1) and 17beta-estradiol (E2), namely 2-hydroxy E1 and E2. Metabolizes cholesterol toward 25-hydroxycholesterol, a physiological regulator of cellular cholesterol homeostasis. May act as a major enzyme for all-trans retinoic acid biosynthesis in the liver. Catalyzes two successive oxidative transformation of all-trans retinol to all-trans retinal and then to the active form all-trans retinoic acid. Primarily catalyzes stereoselective epoxidation of the last double bond of polyunsaturated fatty acids (PUFA), displaying a strong preference for the (R,S) stereoisomer. Catalyzes bisallylic hydroxylation and omega-1 hydroxylation of PUFA. May also participate in eicosanoids metabolism by converting hydroperoxide species into oxo metabolites (lipoxygenase-like reaction, NADPH-independent). Plays a role in the oxidative metabolism of xenobiotics. Catalyzes the N-hydroxylation of heterocyclic amines and the O-deethylation of phenacetin. Metabolizes caffeine via N3-demethylation. This Pongo abelii (Sumatran orangutan) protein is Cytochrome P450 1A2 (CYP1A2).